A 463-amino-acid polypeptide reads, in one-letter code: Argininosuccinate lyase (463 aa).

The protein belongs to the lyase 1 family. Argininosuccinate lyase subfamily.

It is found in the cytoplasm. The catalysed reaction is 2-(N(omega)-L-arginino)succinate = fumarate + L-arginine. Its pathway is amino-acid biosynthesis; L-arginine biosynthesis; L-arginine from L-ornithine and carbamoyl phosphate: step 3/3. The polypeptide is Argininosuccinate lyase (Streptococcus pneumoniae serotype 2 (strain D39 / NCTC 7466)).